The following is a 379-amino-acid chain: Glutamate 5-kinase (379 aa).

Lysine 15 contacts ATP. 3 residues coordinate substrate: serine 56, aspartate 143, and asparagine 155. 175–176 (SD) is a binding site for ATP. Residues 281 to 358 (RGTLAIDAGA…SDAAQLLGVR (78 aa)) enclose the PUA domain.

It belongs to the glutamate 5-kinase family.

Its subcellular location is the cytoplasm. The enzyme catalyses L-glutamate + ATP = L-glutamyl 5-phosphate + ADP. It functions in the pathway amino-acid biosynthesis; L-proline biosynthesis; L-glutamate 5-semialdehyde from L-glutamate: step 1/2. Catalyzes the transfer of a phosphate group to glutamate to form L-glutamate 5-phosphate. The chain is Glutamate 5-kinase from Nitrobacter winogradskyi (strain ATCC 25391 / DSM 10237 / CIP 104748 / NCIMB 11846 / Nb-255).